The sequence spans 70 residues: Small ribosomal subunit protein bS21 (70 aa).

The protein belongs to the bacterial ribosomal protein bS21 family.

This chain is Small ribosomal subunit protein bS21, found in Laribacter hongkongensis (strain HLHK9).